A 137-amino-acid chain; its full sequence is uncharacterized protein (137 aa).

The Ubiquitin-like domain occupies 58–135; that stretch reads VHVVAKTVRP…EVNLQMFLMN (78 aa).

The protein resides in the cytoplasm. Its subcellular location is the nucleus. This is an uncharacterized protein from Schizosaccharomyces pombe (strain 972 / ATCC 24843) (Fission yeast).